A 234-amino-acid polypeptide reads, in one-letter code: Glucosamine-6-phosphate deaminase (234 aa).

Catalysis depends on D62, which acts as the Proton acceptor; for enolization step. Residue N128 is the For ring-opening step of the active site. H130 acts as the Proton acceptor; for ring-opening step in catalysis. Residue E135 is the For ring-opening step of the active site.

It belongs to the glucosamine/galactosamine-6-phosphate isomerase family. NagB subfamily.

The catalysed reaction is alpha-D-glucosamine 6-phosphate + H2O = beta-D-fructose 6-phosphate + NH4(+). Its pathway is amino-sugar metabolism; N-acetylneuraminate degradation; D-fructose 6-phosphate from N-acetylneuraminate: step 5/5. Its function is as follows. Catalyzes the reversible isomerization-deamination of glucosamine 6-phosphate (GlcN6P) to form fructose 6-phosphate (Fru6P) and ammonium ion. The protein is Glucosamine-6-phosphate deaminase of Streptococcus pyogenes serotype M49 (strain NZ131).